Reading from the N-terminus, the 89-residue chain is Small ribosomal subunit protein bS20 (89 aa).

Belongs to the bacterial ribosomal protein bS20 family.

Its function is as follows. Binds directly to 16S ribosomal RNA. The protein is Small ribosomal subunit protein bS20 of Wolbachia pipientis subsp. Culex pipiens (strain wPip).